Reading from the N-terminus, the 418-residue chain is UDP-N-acetylglucosamine 1-carboxyvinyltransferase 2 (418 aa).

Lys22–Asn23 serves as a coordination point for phosphoenolpyruvate. Residue Arg92 coordinates UDP-N-acetyl-alpha-D-glucosamine. The active-site Proton donor is the Cys116. A 2-(S-cysteinyl)pyruvic acid O-phosphothioketal modification is found at Cys116. UDP-N-acetyl-alpha-D-glucosamine is bound by residues Asp305 and Ile327.

Belongs to the EPSP synthase family. MurA subfamily.

The protein resides in the cytoplasm. It catalyses the reaction phosphoenolpyruvate + UDP-N-acetyl-alpha-D-glucosamine = UDP-N-acetyl-3-O-(1-carboxyvinyl)-alpha-D-glucosamine + phosphate. Its pathway is cell wall biogenesis; peptidoglycan biosynthesis. Functionally, cell wall formation. Adds enolpyruvyl to UDP-N-acetylglucosamine. The sequence is that of UDP-N-acetylglucosamine 1-carboxyvinyltransferase 2 from Mesorhizobium japonicum (strain LMG 29417 / CECT 9101 / MAFF 303099) (Mesorhizobium loti (strain MAFF 303099)).